The following is a 211-amino-acid chain: Xanthine phosphoribosyltransferase (211 aa).

Residues Leu31 and Asn38 each coordinate xanthine. Residue 138–142 (ANGRT) participates in 5-phospho-alpha-D-ribose 1-diphosphate binding. Xanthine is bound at residue Lys166.

It belongs to the purine/pyrimidine phosphoribosyltransferase family. Xpt subfamily. In terms of assembly, homodimer.

It is found in the cytoplasm. The enzyme catalyses XMP + diphosphate = xanthine + 5-phospho-alpha-D-ribose 1-diphosphate. The protein operates within purine metabolism; XMP biosynthesis via salvage pathway; XMP from xanthine: step 1/1. Its function is as follows. Converts the preformed base xanthine, a product of nucleic acid breakdown, to xanthosine 5'-monophosphate (XMP), so it can be reused for RNA or DNA synthesis. The polypeptide is Xanthine phosphoribosyltransferase (Chloroflexus aurantiacus (strain ATCC 29364 / DSM 637 / Y-400-fl)).